The chain runs to 167 residues: uncharacterized protein (167 aa).

Positions 1–23 (MKRLHKRFLLATFCALFTATLQA) are cleaved as a signal peptide. C39 and C77 are oxidised to a cystine.

The protein belongs to the fimbrial protein family.

Its subcellular location is the fimbrium. This is an uncharacterized protein from Escherichia coli (strain K12).